The chain runs to 186 residues: Imidazole glycerol phosphate synthase subunit HisH (186 aa).

Positions 1-186 (MIAIIDYGSG…KLLRNFGELA (186 aa)) constitute a Glutamine amidotransferase type-1 domain. Residue Cys-72 is the Nucleophile of the active site. Residues His-167 and Glu-169 contribute to the active site.

Heterodimer of HisH and HisF.

The protein resides in the cytoplasm. It catalyses the reaction 5-[(5-phospho-1-deoxy-D-ribulos-1-ylimino)methylamino]-1-(5-phospho-beta-D-ribosyl)imidazole-4-carboxamide + L-glutamine = D-erythro-1-(imidazol-4-yl)glycerol 3-phosphate + 5-amino-1-(5-phospho-beta-D-ribosyl)imidazole-4-carboxamide + L-glutamate + H(+). The enzyme catalyses L-glutamine + H2O = L-glutamate + NH4(+). The protein operates within amino-acid biosynthesis; L-histidine biosynthesis; L-histidine from 5-phospho-alpha-D-ribose 1-diphosphate: step 5/9. Functionally, IGPS catalyzes the conversion of PRFAR and glutamine to IGP, AICAR and glutamate. The HisH subunit catalyzes the hydrolysis of glutamine to glutamate and ammonia as part of the synthesis of IGP and AICAR. The resulting ammonia molecule is channeled to the active site of HisF. The protein is Imidazole glycerol phosphate synthase subunit HisH of Picrophilus torridus (strain ATCC 700027 / DSM 9790 / JCM 10055 / NBRC 100828 / KAW 2/3).